A 409-amino-acid chain; its full sequence is Peptidase T (409 aa).

A Zn(2+)-binding site is contributed by His-78. Asp-80 is a catalytic residue. Asp-140 provides a ligand contact to Zn(2+). Glu-173 serves as the catalytic Proton acceptor. Positions 174, 196, and 379 each coordinate Zn(2+).

This sequence belongs to the peptidase M20B family. The cofactor is Zn(2+).

It is found in the cytoplasm. The catalysed reaction is Release of the N-terminal residue from a tripeptide.. Functionally, cleaves the N-terminal amino acid of tripeptides. The protein is Peptidase T of Salmonella paratyphi A (strain ATCC 9150 / SARB42).